We begin with the raw amino-acid sequence, 370 residues long: Protein FAM110B (370 aa).

2 disordered regions span residues 127–151 (SSEG…RSEA) and 237–256 (KSPE…RPSL). A phosphoserine mark is found at Ser-238 and Ser-301. The interval 317–337 (DCEQSQDSNSDLRNDDSANDR) is disordered. Residues 326-335 (SDLRNDDSAN) are compositionally biased toward basic and acidic residues.

It belongs to the FAM110 family. As to expression, detected in thyroid, spleen and testis, and at lower levels in stomach, spinal cord, lymph node, trachea, adrenal gland, prostate, ovary and intestine.

It is found in the cytoplasm. Its subcellular location is the cytoskeleton. It localises to the microtubule organizing center. The protein resides in the centrosome. In terms of biological role, may be involved in tumor progression. The chain is Protein FAM110B (FAM110B) from Homo sapiens (Human).